We begin with the raw amino-acid sequence, 182 residues long: UPF0397 protein BCAH820_2657 (182 aa).

The next 5 membrane-spanning stretches (helical) occupy residues 9-29 (VVAI…GFTI), 40-60 (AILT…IGLI), 71-91 (WGIW…MGFI), 114-134 (ITGL…DIIV), and 142-162 (IVIQ…VLGL).

The protein belongs to the UPF0397 family.

The protein localises to the cell membrane. In Bacillus cereus (strain AH820), this protein is UPF0397 protein BCAH820_2657.